The primary structure comprises 167 residues: Transcriptional regulator MraZ (167 aa).

2 consecutive SpoVT-AbrB domains span residues 8 to 51 and 92 to 135; these read ESHH…YGDH and SLPT…KPET.

It belongs to the MraZ family. As to quaternary structure, forms oligomers.

It localises to the cytoplasm. Its subcellular location is the nucleoid. In Ruegeria sp. (strain TM1040) (Silicibacter sp.), this protein is Transcriptional regulator MraZ.